The chain runs to 106 residues: Nucleoid-associated protein Fjoh_2555 (106 aa).

Belongs to the YbaB/EbfC family. Homodimer.

The protein resides in the cytoplasm. Its subcellular location is the nucleoid. Functionally, binds to DNA and alters its conformation. May be involved in regulation of gene expression, nucleoid organization and DNA protection. The sequence is that of Nucleoid-associated protein Fjoh_2555 from Flavobacterium johnsoniae (strain ATCC 17061 / DSM 2064 / JCM 8514 / BCRC 14874 / CCUG 350202 / NBRC 14942 / NCIMB 11054 / UW101) (Cytophaga johnsonae).